The chain runs to 1354 residues: Rho-associated protein kinase 1 (1354 aa).

S2 carries the post-translational modification N-acetylserine. The region spanning 76–338 (YEVVKVIGRG…VEEIKRHLFF (263 aa)) is the Protein kinase domain. ATP-binding positions include 82–90 (IGRGAFGEV) and K105. D198 functions as the Proton acceptor in the catalytic mechanism. The 69-residue stretch at 341 to 409 (DQWAWETLRD…YSNRRYLSPA (69 aa)) folds into the AGC-kinase C-terminal domain. The interval 368 to 727 (FDDLEEDKGD…KKLKEEREAR (360 aa)) is interaction with FHOD1. The stretch at 422-692 (KSLQENLQKT…RLEQEVNEHK (271 aa)) forms a coiled coil. The 78-residue stretch at 479 to 556 (STVSQIEKEK…LEEANDLLRT (78 aa)) folds into the REM-1 domain. Residues 707–946 (EAKSVAMCEM…AVSRLEETNS (240 aa)) are SHROOM3 binding. The region spanning 949–1015 (TKDIELLRKE…LAEIMNRKDF (67 aa)) is the RhoBD domain. The interval 998–1010 (LKTQAVNKLAEIM) is RHOA binding. Residues 1011–1102 (NRKDFKIDKK…KLSDLSDSTS (92 aa)) are a coiled coil. The tract at residues 1101–1120 (TSVASFPSADETDPNLPESR) is disordered. Residues S1105 and S1108 each carry the phosphoserine modification. Residues 1115 to 1354 (NLPESRIEGW…VVKNTSGKTS (240 aa)) form an auto-inhibitory region. One can recognise a PH domain in the interval 1118-1317 (ESRIEGWLSV…WVTHLVKKIP (200 aa)). The Phorbol-ester/DAG-type zinc finger occupies 1228–1283 (GHEFIPTLYHFPANCEACAKPLWHVFKPPPALECRRCHVKCHRDHLDKKEDLISPC). The residue at position 1328 (S1328) is a Phosphoserine. Residues 1333 to 1354 (STRSTANQSFRKVVKNTSGKTS) form a disordered region.

The protein belongs to the protein kinase superfamily. AGC Ser/Thr protein kinase family. As to quaternary structure, homodimer. Interacts with RHOA (activated by GTP), RHOB, RHOC, GEM, MYLC2B, RHOE, PPP1R12A, LIMK1, LIMK2, TSG101, CHORDC1, DAPK3, PFN1, PTEN and JIP3. Interacts with FHOD1 in a Src-dependent manner. Interacts with ITGB1BP1 (via N-terminus and PTB domain). Interacts with SHROOM3. Mg(2+) serves as cofactor. Autophosphorylated on serine and threonine residues. Post-translationally, cleaved by caspase-3 during apoptosis. This leads to constitutive activation of the kinase and membrane blebbing. Detected in corneal epithelium.

The protein localises to the cytoplasm. It is found in the cytoskeleton. It localises to the microtubule organizing center. The protein resides in the centrosome. Its subcellular location is the centriole. The protein localises to the golgi apparatus membrane. It is found in the cell projection. It localises to the bleb. The protein resides in the cell membrane. Its subcellular location is the lamellipodium. The protein localises to the ruffle. It catalyses the reaction L-seryl-[protein] + ATP = O-phospho-L-seryl-[protein] + ADP + H(+). It carries out the reaction L-threonyl-[protein] + ATP = O-phospho-L-threonyl-[protein] + ADP + H(+). With respect to regulation, activated by RHOA binding. Inhibited by Y-27632. Protein kinase which is a key regulator of the actin cytoskeleton and cell polarity. Involved in regulation of smooth muscle contraction, actin cytoskeleton organization, stress fiber and focal adhesion formation, neurite retraction, cell adhesion and motility via phosphorylation of DAPK3, GFAP, LIMK1, LIMK2, MYL9/MLC2, TPPP, PFN1 and PPP1R12A. Phosphorylates FHOD1 and acts synergistically with it to promote SRC-dependent non-apoptotic plasma membrane blebbing. Phosphorylates JIP3 and regulates the recruitment of JNK to JIP3 upon UVB-induced stress. Acts as a suppressor of inflammatory cell migration by regulating PTEN phosphorylation and stability. Acts as a negative regulator of VEGF-induced angiogenic endothelial cell activation. Required for centrosome positioning and centrosome-dependent exit from mitosis. Plays a role in terminal erythroid differentiation. Inhibits podocyte motility via regulation of actin cytoskeletal dynamics and phosphorylation of CFL1. Promotes keratinocyte terminal differentiation. Involved in osteoblast compaction through the fibronectin fibrillogenesis cell-mediated matrix assembly process, essential for osteoblast mineralization. May regulate closure of the eyelids and ventral body wall by inducing the assembly of actomyosin bundles. In Oryctolagus cuniculus (Rabbit), this protein is Rho-associated protein kinase 1 (ROCK1).